Consider the following 754-residue polypeptide: ATP-dependent RNA helicase drs1 (754 aa).

The disordered stretch occupies residues 121–237; it reads SKTESNRASN…SDSEEDEEEI (117 aa). Acidic residues-rich tracts occupy residues 155-175 and 186-205; these read SEEE…EDLA and ENED…DDIT. Residues 259 to 287 carry the Q motif motif; the sequence is SSFQSMNLSRPILKGLSNLGFEVPTQIQD. The region spanning 290 to 464 is the Helicase ATP-binding domain; the sequence is IPLALLGKDI…RLSLNRPVRV (175 aa). An ATP-binding site is contributed by 303-310; sequence AVTGSGKT. The DEAD box signature appears at 412–415; that stretch reads DEAD. A Helicase C-terminal domain is found at 475–641; that stretch reads LLTQEFVRVR…NRNLDFNKVE (167 aa). Residues 655-728 adopt a coiled-coil conformation; the sequence is QKVLDEEKQE…RKKQMEKEEV (74 aa). The tract at residues 692–754 is disordered; it reads ARTWFQSEKD…STKKSKSKRK (63 aa). Basic and acidic residues-rich tracts occupy residues 698 to 715 and 723 to 741; these read SEKD…DKKS and MEKE…DRLS. Residues 742-754 are compositionally biased toward basic residues; it reads NKKSTKKSKSKRK.

It belongs to the DEAD box helicase family. DDX27/DRS1 subfamily. Associates with pre-ribosomal particles.

Its subcellular location is the nucleus. The protein localises to the nucleolus. It carries out the reaction ATP + H2O = ADP + phosphate + H(+). Functionally, ATP-binding RNA helicase involved in ribosome assembly. This chain is ATP-dependent RNA helicase drs1 (drs1), found in Schizosaccharomyces pombe (strain 972 / ATCC 24843) (Fission yeast).